The following is a 732-amino-acid chain: MADNKKSPETGGITMQIPGKGRTNRDWWPDQLNLKILSQNSPLSNPLGQKFNYRVEFSKLDLAAVKQDLRDLMTSSQDWWPADFGHYGPLFIRMAWHSAGTYRTFDGRGGASGGEQRFPPLNSWPDNVNLDKARRLLWPIKQKYGQKISWADLMILAGNVALESMGFKTFGFGGGREDVWEPQEDTYWGSEDTWLGDKRYSGDRELEKPLAAVQMGLIYVNPEGPDGNPDPVAAARDIREVFARMAMNDEETVALIAGGHAFGKTHGAGPASHLGPEPEAAGIEEQGLGWKNSFGTGKGNDTITSGIEITWTPTPTKWSNNFFRVLFSYEWELTKSPAGAYQWKPKGEAGAGTVPDPHDPKKRHAPGMLTTDLALRFDPIYEKISRRFYENPELFADAFARAWFKLTHRDMGPKTRYLGPEVPDEDLIWQDPIPAINHPLIDDQDIALLKSRILASGLSISRLVYTAWAAASTFRGSDKRGGANGARIRLDPQKNWEVNEPEELANVLKILEGIQHEFNQNAPGGKRVSLADLIVLGGCAGIEQAAKNAGYSVTVPFTPGRMDAVQEQTDAASFAVLEPMADGFRNYAKRHLPMKPEAMLIDKAQLLMLTAPEMTVLIGGMRVLNTNFGQTKHGVFTDKPETLTNDYFVHLLDMGTEWTPVSETEDLYEGRDRRTGEIRWTGTRVDLIFGSNSQLRALAEVYACSDGKDKFIQDFVAAWAKVMNLDRFDRIQ.

The interval 1–26 is disordered; that stretch reads MADNKKSPETGGITMQIPGKGRTNRD. Residues 96 to 219 constitute a cross-link (tryptophyl-tyrosyl-methioninium (Trp-Tyr) (with M-245)); sequence WHSAGTYRTF…LAAVQMGLIY (124 aa). Catalysis depends on His-97, which acts as the Proton acceptor. A cross-link (tryptophyl-tyrosyl-methioninium (Tyr-Met) (with W-96)) is located at residues 219 to 245; that stretch reads YVNPEGPDGNPDPVAAARDIREVFARM. His-260 lines the heme b pocket. Residues 344-365 form a disordered region; the sequence is KPKGEAGAGTVPDPHDPKKRHA.

Belongs to the peroxidase family. Peroxidase/catalase subfamily. Homodimer or homotetramer. Heme b is required as a cofactor. Post-translationally, formation of the three residue Trp-Tyr-Met cross-link is important for the catalase, but not the peroxidase activity of the enzyme.

It catalyses the reaction H2O2 + AH2 = A + 2 H2O. The enzyme catalyses 2 H2O2 = O2 + 2 H2O. Bifunctional enzyme with both catalase and broad-spectrum peroxidase activity. This chain is Catalase-peroxidase, found in Methanospirillum hungatei JF-1 (strain ATCC 27890 / DSM 864 / NBRC 100397 / JF-1).